The chain runs to 118 residues: Ribosome-binding factor A (118 aa).

This sequence belongs to the RbfA family. As to quaternary structure, monomer. Binds 30S ribosomal subunits, but not 50S ribosomal subunits or 70S ribosomes.

The protein resides in the cytoplasm. One of several proteins that assist in the late maturation steps of the functional core of the 30S ribosomal subunit. Associates with free 30S ribosomal subunits (but not with 30S subunits that are part of 70S ribosomes or polysomes). Required for efficient processing of 16S rRNA. May interact with the 5'-terminal helix region of 16S rRNA. In Latilactobacillus sakei subsp. sakei (strain 23K) (Lactobacillus sakei subsp. sakei), this protein is Ribosome-binding factor A.